We begin with the raw amino-acid sequence, 694 residues long: Ubiquitin-like modifier-activating enzyme ATG7 (694 aa).

Positions Gly-370–Gly-375 match the GXGXXG motif motif. Cys-550 acts as the Glycyl thioester intermediate in catalysis. The tract at residues Ala-650–Gly-689 is homodimerization.

The protein belongs to the ATG7 family. In terms of assembly, homodimer. Interacts with ATG8 through a thioester bond between Cys-550 and the C-terminal 'Gly-116' of ATG8 and with ATG12 through a thioester bond between Cys-550 and the C-terminal 'Gly-160' of ATG12. Also interacts with ATG3.

The protein localises to the cytoplasm. The protein resides in the preautophagosomal structure. Functionally, E1-like activating enzyme involved in the 2 ubiquitin-like systems required for cytoplasm to vacuole transport (Cvt) and autophagy. Activates ATG12 for its conjugation with ATG5 and ATG8 for its conjugation with phosphatidylethanolamine. Both systems are needed for the ATG8 association to Cvt vesicles and autophagosomes membranes. Autophagy is essential for maintenance of amino acid levels and protein synthesis under nitrogen starvation. Required for selective autophagic degradation of the nucleus (nucleophagy) as well as for mitophagy which contributes to regulate mitochondrial quantity and quality by eliminating the mitochondria to a basal level to fulfill cellular energy requirements and preventing excess ROS production. Autophagy is required for proper vegetative growth, asexual/sexual reproduction, and full virulence. Autophagy is particularly involved in the biosynthesis of deoxynivalenol (DON), an important virulence determinant. This is Ubiquitin-like modifier-activating enzyme ATG7 from Gibberella zeae (strain ATCC MYA-4620 / CBS 123657 / FGSC 9075 / NRRL 31084 / PH-1) (Wheat head blight fungus).